Consider the following 305-residue polypeptide: Ribosomal RNA small subunit methyltransferase H (305 aa).

S-adenosyl-L-methionine contacts are provided by residues 37 to 39 (GGH), aspartate 57, phenylalanine 85, aspartate 101, and histidine 108.

It belongs to the methyltransferase superfamily. RsmH family.

Its subcellular location is the cytoplasm. The enzyme catalyses cytidine(1402) in 16S rRNA + S-adenosyl-L-methionine = N(4)-methylcytidine(1402) in 16S rRNA + S-adenosyl-L-homocysteine + H(+). In terms of biological role, specifically methylates the N4 position of cytidine in position 1402 (C1402) of 16S rRNA. This Parabacteroides distasonis (strain ATCC 8503 / DSM 20701 / CIP 104284 / JCM 5825 / NCTC 11152) protein is Ribosomal RNA small subunit methyltransferase H.